Consider the following 85-residue polypeptide: Small ribosomal subunit protein uS17 (85 aa).

This sequence belongs to the universal ribosomal protein uS17 family. In terms of assembly, part of the 30S ribosomal subunit.

One of the primary rRNA binding proteins, it binds specifically to the 5'-end of 16S ribosomal RNA. The chain is Small ribosomal subunit protein uS17 from Anaeromyxobacter sp. (strain Fw109-5).